Consider the following 267-residue polypeptide: Acyl-[acyl-carrier-protein]--UDP-N-acetylglucosamine O-acyltransferase (267 aa).

This sequence belongs to the transferase hexapeptide repeat family. LpxA subfamily. In terms of assembly, homotrimer.

It is found in the cytoplasm. It catalyses the reaction a (3R)-hydroxyacyl-[ACP] + UDP-N-acetyl-alpha-D-glucosamine = a UDP-3-O-[(3R)-3-hydroxyacyl]-N-acetyl-alpha-D-glucosamine + holo-[ACP]. It participates in glycolipid biosynthesis; lipid IV(A) biosynthesis; lipid IV(A) from (3R)-3-hydroxytetradecanoyl-[acyl-carrier-protein] and UDP-N-acetyl-alpha-D-glucosamine: step 1/6. In terms of biological role, involved in the biosynthesis of lipid A, a phosphorylated glycolipid that anchors the lipopolysaccharide to the outer membrane of the cell. This chain is Acyl-[acyl-carrier-protein]--UDP-N-acetylglucosamine O-acyltransferase, found in Hamiltonella defensa subsp. Acyrthosiphon pisum (strain 5AT).